The sequence spans 253 residues: uncharacterized protein (253 aa).

6–30 is an NADP(+) binding site; sequence IITASDSGIGKECALLLAQQGFDIG. Ser-140 lines the substrate pocket. Tyr-153 functions as the Proton acceptor in the catalytic mechanism.

Belongs to the short-chain dehydrogenases/reductases (SDR) family.

This is an uncharacterized protein from Escherichia coli (strain K12).